The following is a 448-amino-acid chain: Adenylosuccinate synthetase 1 (448 aa).

Residues 22–28 and 50–52 contribute to the GTP site; these read GDEGKGK and GHT. Residue D23 is the Proton acceptor of the active site. Mg(2+) contacts are provided by D23 and G50. IMP is bound by residues 23-26, 48-51, T139, R153, Q234, T249, and R321; these read DEGK and NAGH. The active-site Proton donor is the H51. 317–323 provides a ligand contact to substrate; sequence SVTGRPR. Residues R323, 349-351, and 431-433 each bind GTP; these read KLD and STG.

The protein belongs to the adenylosuccinate synthetase family. Homodimer. Mg(2+) serves as cofactor.

It localises to the cytoplasm. It carries out the reaction IMP + L-aspartate + GTP = N(6)-(1,2-dicarboxyethyl)-AMP + GDP + phosphate + 2 H(+). Its pathway is purine metabolism; AMP biosynthesis via de novo pathway; AMP from IMP: step 1/2. Its function is as follows. Plays an important role in the de novo pathway of purine nucleotide biosynthesis. Catalyzes the first committed step in the biosynthesis of AMP from IMP. This is Adenylosuccinate synthetase 1 from Burkholderia lata (strain ATCC 17760 / DSM 23089 / LMG 22485 / NCIMB 9086 / R18194 / 383).